A 201-amino-acid polypeptide reads, in one-letter code: MARNFELSLILFVLYLSTAAIVMARNLEEESSGDTEFIKASCETTSYPDRCFQSLSSYASEIKKQPRKLAETALAVSIARAKSAKTYVSEMTDYKGITKRQHEAVADCLEEMGDTVDRLSNSLKELKHLEEGDSGEDFWFCLSNVRTWTSAALTDETACMDGFGGKAMAGELKSLIRTHIVSVAEETSNALALINDFASKH.

Positions 1 to 24 (MARNFELSLILFVLYLSTAAIVMA) are cleaved as a signal peptide. 2 cysteine pairs are disulfide-bonded: Cys42/Cys51 and Cys108/Cys159.

Belongs to the PMEI family. In terms of assembly, binds reversibly to PME3 to inhibit its activity; the stability of the PME3-PMEI7 complex and the inhibition of the pectin methylesterase (PME) activity is pH-dependent, based on protonation status of amino-acids at the complex interface. Accumulates in etiolated hypocotyls (at protein level).

The protein resides in the secreted. It localises to the extracellular space. The protein localises to the apoplast. It is found in the cell wall. Functionally, pectin methylesterase (PME) inhibitor that can target PME3 in a pH-dependent manner, mainly in slightly acidic conditions (pH 6.0 and 5.0) but not at pH 7.0; this processus relies on changes in the protonation of amino acids involved in intermolecular and intramolecular interactions. Regulates homogalacturonan methylesterification during plant development. The chain is Pectinesterase inhibitor 7 from Arabidopsis thaliana (Mouse-ear cress).